A 235-amino-acid polypeptide reads, in one-letter code: High mobility group protein 1.2 (235 aa).

The segment covering M1 to Q34 has biased composition (polar residues). Residues M1–G47 are disordered. DNA-binding regions (HMG box) lie at residues G47–G117 and P135–K203.

It belongs to the HMGB family.

The protein localises to the nucleus. The chain is High mobility group protein 1.2 (hmg-1.2) from Caenorhabditis elegans.